Here is a 165-residue protein sequence, read N- to C-terminus: Destrin (165 aa).

At alanine 2 the chain carries N-acetylalanine. Position 3 is a phosphoserine (serine 3). Positions 4-153 (GVQVADEVCR…NRACIAEKLG (150 aa)) constitute an ADF-H domain. The residue at position 19 (lysine 19) is an N6-acetyllysine. Residues 30–34 (KKRKK) carry the Nuclear localization signal motif.

Belongs to the actin-binding proteins ADF family. In terms of processing, ISGylated.

In terms of biological role, actin-depolymerizing protein. Severs actin filaments (F-actin) and binds to actin monomers (G-actin). Acts in a pH-independent manner. The polypeptide is Destrin (DSTN) (Bos taurus (Bovine)).